Reading from the N-terminus, the 275-residue chain is Polyamine aminopropyltransferase (275 aa).

In terms of domain architecture, PABS spans 2-235; the sequence is ELWFTEKQTK…GLWTFTIGSK (234 aa). Glutamine 31 is an S-methyl-5'-thioadenosine binding site. Spermidine-binding residues include histidine 62 and aspartate 86. S-methyl-5'-thioadenosine-binding positions include glutamate 106 and 137–138; that span reads DG. Aspartate 155 (proton acceptor) is an active-site residue. 155 to 158 serves as a coordination point for spermidine; the sequence is DSTE. Proline 162 is a binding site for S-methyl-5'-thioadenosine.

The protein belongs to the spermidine/spermine synthase family. Homodimer or homotetramer.

Its subcellular location is the cytoplasm. The enzyme catalyses S-adenosyl 3-(methylsulfanyl)propylamine + putrescine = S-methyl-5'-thioadenosine + spermidine + H(+). The protein operates within amine and polyamine biosynthesis; spermidine biosynthesis; spermidine from putrescine: step 1/1. Catalyzes the irreversible transfer of a propylamine group from the amino donor S-adenosylmethioninamine (decarboxy-AdoMet) to putrescine (1,4-diaminobutane) to yield spermidine. The chain is Polyamine aminopropyltransferase from Bacillus mycoides (strain KBAB4) (Bacillus weihenstephanensis).